A 302-amino-acid chain; its full sequence is Serine/threonine-protein phosphatase alpha-3 isoform (302 aa).

The Mn(2+) site is built by Asp62, His64, Asp90, and Asn122. The active-site Proton donor is the His123. Residues His171 and His246 each contribute to the Mn(2+) site.

Belongs to the PPP phosphatase family. PP-1 subfamily. In terms of assembly, interacts with Nop17l. The cofactor is Mn(2+).

It catalyses the reaction O-phospho-L-seryl-[protein] + H2O = L-seryl-[protein] + phosphate. The enzyme catalyses O-phospho-L-threonyl-[protein] + H2O = L-threonyl-[protein] + phosphate. The chain is Serine/threonine-protein phosphatase alpha-3 isoform (Pp1-13C) from Drosophila melanogaster (Fruit fly).